A 336-amino-acid chain; its full sequence is Glutamyl endopeptidase (336 aa).

Positions 1 to 29 (MKGKFLKVSSLFVATLTTATLVSSPAANA) are cleaved as a signal peptide. The propeptide occupies 30-68 (LSSKAMDNHPQQTQSSKQQTPKIQKGGNLKPLEQREHAN). Residues 34-61 (AMDNHPQQTQSSKQQTPKIQKGGNLKPL) are disordered. The span at 39–51 (PQQTQSSKQQTPK) shows a compositional bias: low complexity. Catalysis depends on charge relay system residues His-119, Asp-161, and Ser-237. Residues 283–336 (FANDDQPNNPDNPDNPNNPDNPNNPDEPNNPDNPNNPDNPDNGDNNNSDNPDAA) form a disordered region. Positions 286-336 (DDQPNNPDNPDNPNNPDNPNNPDEPNNPDNPNNPDNPDNGDNNNSDNPDAA) are enriched in low complexity. 11 consecutive repeat copies span residues 289-291 (PNN), 292-294 (PDN), 295-297 (PDN), 298-300 (PNN), 301-303 (PDN), 304-306 (PNN), 310-312 (PNN), 313-315 (PDN), 316-318 (PNN), 319-321 (PDN), and 322-324 (PDN). Residues 289–324 (PNNPDNPDNPNNPDNPNNPDEPNNPDNPNNPDNPDN) are 11 X 3 AA repeats of P-[DN]-N.

The protein belongs to the peptidase S1B family. Proteolytically cleaved by aureolysin (aur). This cleavage leads to the activation of SspA.

The protein resides in the secreted. The enzyme catalyses Preferential cleavage: Glu-|-Xaa, Asp-|-Xaa.. Preferentially cleaves peptide bonds on the carboxyl-terminal side of aspartate and glutamate. Along with other extracellular proteases it is involved in colonization and infection of human tissues. Required for proteolytic maturation of thiol protease SspB and inactivation of SspC, an inhibitor of SspB. It is the most important protease for degradation of fibronectin-binding protein (FnBP) and surface protein A, which are involved in adherence to host cells. May also protect bacteria against host defense mechanism by cleaving the immunoglobulin classes IgG, IgA and IgM. May be involved in the stability of secreted lipases. The sequence is that of Glutamyl endopeptidase (sspA) from Staphylococcus aureus (strain NCTC 8325 / PS 47).